The following is a 188-amino-acid chain: GTPase KRas (188 aa).

GTP contacts are provided by residues 10-18, 29-35, 59-60, and 116-119; these read GAGGVGKSA, VDEYDPT, AG, and NKCD. An Effector region motif is present at residues 32-40; it reads YDPTIEDSY. The interval 167-188 is disordered; that stretch reads KEKMSKEGKKKKKKSKTKCVLM. C185 carries the post-translational modification Cysteine methyl ester. C185 carries S-farnesyl cysteine lipidation. A propeptide spans 186-188 (removed in mature form); it reads VLM.

This sequence belongs to the small GTPase superfamily. Ras family.

Its subcellular location is the cell membrane. It localises to the cytoplasm. The catalysed reaction is GTP + H2O = GDP + phosphate + H(+). With respect to regulation, alternates between an inactive form bound to GDP and an active form bound to GTP. Activated by a guanine nucleotide-exchange factor (GEF) and inactivated by a GTPase-activating protein (GAP). Ras proteins bind GDP/GTP and possess intrinsic GTPase activity. Plays an important role in the regulation of cell proliferation. May play a role in promoting oncogenic events by inducing transcriptional silencing of tumor suppressor genes (TSGs). This chain is GTPase KRas (kras), found in Cyprinus carpio (Common carp).